Here is a 213-residue protein sequence, read N- to C-terminus: Gas vesicle protein F1 (213 aa).

It belongs to the gas vesicle GvpF/GvpL family. As to quaternary structure, binds GvpA1 in early growth stages; is the only one of GvpF1 to GvpM1 that interacts with GvpA1 in H.volcanii experiments. GvpF to GvpM interact with each other in vitro, and may form multi-subunit complex(es). Interacts with GvpC1 and GvpO1.

It is found in the gas vesicle. It localises to the cytoplasm. Functionally, might be involved in preventing aggregation of GvpA1. Proteins GvpF to GvpM might be involved in nucleating gas vesicle formation. A minor component of the gas vesicle, also found in soluble extracts. Gas vesicles are hollow, gas filled proteinaceous nanostructures found in several microbial planktonic microorganisms. They allow positioning of halobacteria at the optimal depth for growth in the poorly aerated, shallow brine pools of their habitat. Expression of a 9.5 kb p-vac DNA fragment containing 2 divergently transcribed regions (gvpD-gvpE-gvpF-gvpG-gvpH-gvpI-gvpJ-gvpK-gvpL-gvpM and gvpA-gvpC-gvpN-gvpO) allows H.volcanii to produce gas vesicles. A minimal gas vesicle can be made in H.volcanii by gvpA1-gvpO1 plus gvpF1-gvpG1-gvpJ1-gvpK1-gvpL1-gvpM1; lack of enough GvpJ1 prevents formation. The same region restores gas vesicle production in H.halobium without the p-vac locus. In Halobacterium salinarum (strain ATCC 700922 / JCM 11081 / NRC-1) (Halobacterium halobium), this protein is Gas vesicle protein F1 (gvpF11).